Here is a 334-residue protein sequence, read N- to C-terminus: Beta-hexosaminidase (334 aa).

Substrate is bound by residues Asp-60, Arg-68, Arg-133, and 163–164 (KH). His-176 acts as the Proton donor/acceptor in catalysis. The Nucleophile role is filled by Asp-247.

This sequence belongs to the glycosyl hydrolase 3 family. NagZ subfamily.

The protein resides in the cytoplasm. It carries out the reaction Hydrolysis of terminal non-reducing N-acetyl-D-hexosamine residues in N-acetyl-beta-D-hexosaminides.. It functions in the pathway cell wall biogenesis; peptidoglycan recycling. Plays a role in peptidoglycan recycling by cleaving the terminal beta-1,4-linked N-acetylglucosamine (GlcNAc) from peptide-linked peptidoglycan fragments, giving rise to free GlcNAc, anhydro-N-acetylmuramic acid and anhydro-N-acetylmuramic acid-linked peptides. This is Beta-hexosaminidase from Xanthomonas axonopodis pv. citri (strain 306).